The sequence spans 252 residues: Trans-aconitate 2-methyltransferase (252 aa).

This sequence belongs to the methyltransferase superfamily. Tam family.

Its subcellular location is the cytoplasm. It carries out the reaction trans-aconitate + S-adenosyl-L-methionine = (E)-3-(methoxycarbonyl)pent-2-enedioate + S-adenosyl-L-homocysteine. Catalyzes the S-adenosylmethionine monomethyl esterification of trans-aconitate. In Shigella flexneri, this protein is Trans-aconitate 2-methyltransferase.